The primary structure comprises 366 residues: MTLDLHELKTLLDDVSEGHRLTVDEAENLFKVRDRSSFFITAAADALREKRCGNAITWVKNQNINCSNVCVNSCGFCGYSCKPGDSKAFELTPELVGEKAALAASRGVTEICTVSGLHPAYDLNSYLSIYQAIRENAPGVHIHASNPMEVAYAARKTGCSTREVLEAFRDAGVGTLCGTAAEILVDEIRDVICPEKISTDDWVRIIKESHNAGIRSTATIMYGHCESVTDQVRHLSILRDIQDETHGFTEFVPLSFIHPGTPLYRKGMARPGATGREDMLMIAISRLFLDNFTNIQVSWVKLGLKMVQIGLMSGANDIGGTLYEESISSSAGAKAGEYLDPADMRYISEDLGRTLVERRTDYSPVH.

The Radical SAM core domain occupies 51 to 290; sequence RCGNAITWVK…MIAISRLFLD (240 aa). Cysteine 70, cysteine 74, and cysteine 77 together coordinate [4Fe-4S] cluster.

Belongs to the radical SAM superfamily. CofH family. As to quaternary structure, consists of two subunits, CofG and CofH. It depends on [4Fe-4S] cluster as a cofactor.

The enzyme catalyses 5-amino-6-(D-ribitylamino)uracil + L-tyrosine + S-adenosyl-L-methionine = 5-amino-5-(4-hydroxybenzyl)-6-(D-ribitylimino)-5,6-dihydrouracil + 2-iminoacetate + 5'-deoxyadenosine + L-methionine + H(+). It participates in cofactor biosynthesis; coenzyme F0 biosynthesis. In terms of biological role, catalyzes the radical-mediated synthesis of 5-amino-5-(4-hydroxybenzyl)-6-(D-ribitylimino)-5,6-dihydrouracil from 5-amino-6-(D-ribitylamino)uracil and L-tyrosine. The polypeptide is 5-amino-6-(D-ribitylamino)uracil--L-tyrosine 4-hydroxyphenyl transferase (Methanospirillum hungatei JF-1 (strain ATCC 27890 / DSM 864 / NBRC 100397 / JF-1)).